A 207-amino-acid polypeptide reads, in one-letter code: Urease accessory protein UreG (207 aa).

Position 12 to 19 (12 to 19) interacts with GTP; that stretch reads GPVGAGKT.

This sequence belongs to the SIMIBI class G3E GTPase family. UreG subfamily. In terms of assembly, homodimer. UreD, UreF and UreG form a complex that acts as a GTP-hydrolysis-dependent molecular chaperone, activating the urease apoprotein by helping to assemble the nickel containing metallocenter of UreC. The UreE protein probably delivers the nickel.

Its subcellular location is the cytoplasm. Functionally, facilitates the functional incorporation of the urease nickel metallocenter. This process requires GTP hydrolysis, probably effectuated by UreG. The protein is Urease accessory protein UreG of Cereibacter sphaeroides (strain ATCC 17029 / ATH 2.4.9) (Rhodobacter sphaeroides).